Consider the following 114-residue polypeptide: Endoribonuclease MazF2 (114 aa).

Belongs to the PemK/MazF family. In terms of assembly, probably forms a complex with cognate antitoxin MazE2.

Its function is as follows. Toxic component of a type II toxin-antitoxin (TA) system. Acts as an endoribonuclease on single-strand RNA, cleaving between the second and third bases in the sequences CUCCU and UUCCU. Neutralized by coexpression with cognate antitoxin MazE2. The polypeptide is Endoribonuclease MazF2 (mazF2) (Mycobacterium bovis (strain ATCC BAA-935 / AF2122/97)).